Reading from the N-terminus, the 189-residue chain is dCTP deaminase, dUMP-forming (189 aa).

Residues Lys101–Arg106, Asp119, Thr127–Glu129, Gln148, Tyr162, and Gln174 each bind dCTP. Glu129 functions as the Proton donor/acceptor in the catalytic mechanism. Residues Ala166 to Ser189 are disordered. Polar residues predominate over residues Tyr171–Ser189.

The protein belongs to the dCTP deaminase family. Homotrimer.

It catalyses the reaction dCTP + 2 H2O = dUMP + NH4(+) + diphosphate. The protein operates within pyrimidine metabolism; dUMP biosynthesis; dUMP from dCTP: step 1/1. Bifunctional enzyme that catalyzes both the deamination of dCTP to dUTP and the hydrolysis of dUTP to dUMP without releasing the toxic dUTP intermediate. The sequence is that of dCTP deaminase, dUMP-forming from Mycolicibacterium smegmatis (strain ATCC 700084 / mc(2)155) (Mycobacterium smegmatis).